A 103-amino-acid chain; its full sequence is RNA-binding protein YlxQ (103 aa).

It belongs to the eukaryotic ribosomal protein eL8 family.

In terms of biological role, RNA-binding protein that recognizes the K-turn motif present in ribosomal RNA, but also in box C/D and box C'/D' sRNAs. The polypeptide is RNA-binding protein YlxQ (Enterococcus faecium (Streptococcus faecium)).